We begin with the raw amino-acid sequence, 134 residues long: ATP synthase epsilon chain (134 aa).

The protein belongs to the ATPase epsilon chain family. F-type ATPases have 2 components, CF(1) - the catalytic core - and CF(0) - the membrane proton channel. CF(1) has five subunits: alpha(3), beta(3), gamma(1), delta(1), epsilon(1). CF(0) has three main subunits: a, b and c.

The protein resides in the cell inner membrane. In terms of biological role, produces ATP from ADP in the presence of a proton gradient across the membrane. The sequence is that of ATP synthase epsilon chain from Rhodospirillum rubrum (strain ATCC 11170 / ATH 1.1.1 / DSM 467 / LMG 4362 / NCIMB 8255 / S1).